A 234-amino-acid chain; its full sequence is Probable porphobilinogen deaminase (234 aa).

The protein belongs to the HMBS family.

It carries out the reaction 4 porphobilinogen + H2O = hydroxymethylbilane + 4 NH4(+). Its pathway is porphyrin-containing compound metabolism; protoporphyrin-IX biosynthesis; coproporphyrinogen-III from 5-aminolevulinate: step 2/4. In terms of biological role, tetrapolymerization of the monopyrrole PBG into the hydroxymethylbilane pre-uroporphyrinogen in several discrete steps. In Chlamydia pneumoniae (Chlamydophila pneumoniae), this protein is Probable porphobilinogen deaminase (hemC).